The sequence spans 305 residues: Porphobilinogen deaminase (305 aa).

An S-(dipyrrolylmethanemethyl)cysteine modification is found at Cys243.

The protein belongs to the HMBS family. Monomer. Requires dipyrromethane as cofactor.

It carries out the reaction 4 porphobilinogen + H2O = hydroxymethylbilane + 4 NH4(+). Its pathway is porphyrin-containing compound metabolism; protoporphyrin-IX biosynthesis; coproporphyrinogen-III from 5-aminolevulinate: step 2/4. Tetrapolymerization of the monopyrrole PBG into the hydroxymethylbilane pre-uroporphyrinogen in several discrete steps. The sequence is that of Porphobilinogen deaminase from Limosilactobacillus reuteri (strain DSM 20016) (Lactobacillus reuteri).